The chain runs to 470 residues: Neuronal acetylcholine receptor subunit beta-4 (470 aa).

The first 3 residues, 1-3 (STA), serve as a signal peptide directing secretion. Residues 4–216 (ADAEEKLMNH…IIKRKPLFYT (213 aa)) lie on the Extracellular side of the membrane. Residues asparagine 29, asparagine 118, and asparagine 146 are each glycosylated (N-linked (GlcNAc...) asparagine). A disulfide bond links cysteine 133 and cysteine 147. A helical transmembrane segment spans residues 217-237 (INLIIPCVLITSLAILVFYLP). Topologically, residues 238 to 245 (SDCGEKMT) are cytoplasmic. Glutamate 242 is a binding site for Na(+). A helical membrane pass occupies residues 246–266 (LCISVLLALTVFLLLISKIVP). The Extracellular portion of the chain corresponds to 267–278 (PTSLDVPLIGKY). The chain crosses the membrane as a helical span at residues 279–299 (LMFTMVLVTFSIVTSVCVLNV). Topologically, residues 300 to 438 (HHRSPSTHTM…WKYVAMVVDR (139 aa)) are cytoplasmic. A helical transmembrane segment spans residues 439 to 459 (LFLWIFVLVCVLGTVGLFLQP). The Extracellular segment spans residues 460 to 470 (LFQNHIAATNP).

It belongs to the ligand-gated ion channel (TC 1.A.9) family. Acetylcholine receptor (TC 1.A.9.1) subfamily. Beta-4/CHRNB4 sub-subfamily. As to quaternary structure, neuronal AChR is composed of two different types of subunits: alpha and beta. CHRNB4/Beta-4 subunit can be combined to CHRNA2/alpha-2, CHRNA3/alpha-3 or CHRNA4/alpha-4, CHRNA5/alpha-5 and CHRNB3/beta-3 to give rise to functional receptors.

It localises to the synaptic cell membrane. The protein localises to the cell membrane. It carries out the reaction Ca(2+)(in) = Ca(2+)(out). The enzyme catalyses K(+)(in) = K(+)(out). It catalyses the reaction Na(+)(in) = Na(+)(out). Activated by a myriad of ligands such as acetylcholine, cytisine, nicotine, choline and epibatidine. The heteropentamer CHRNA3:CHRNB4 activity is blocked by the alpha-conotoxin ImI and AuIB. Functionally, component of neuronal acetylcholine receptors (nAChRs) that function as pentameric, ligand-gated cation channels with high calcium permeability among other activities. nAChRs are excitatory neurotrasnmitter receptors formed by a collection of nAChR subunits known to mediate synaptic transmission in the nervous system and the neuromuscular junction. Each nAchR subunit confers differential attributes to channel properties, including activation, deactivation and desensitization kinetics, pH sensitivity, cation permeability, and binding to allosteric modulators. CHRNB4 forms heteropentameric neuronal acetylcholine receptors with CHRNA2, CHRNA3 and CHRNA4, as well as CHRNA5 and CHRNB3 as accesory subunits. CHRNA3:CHRNB4 being predominant in neurons of the autonomic ganglia, it is known as ganglionic nicotinic receptor. CHRNA3:CHRNB4 or CHRNA3:CHRNA5:CHRNB4 play also an important role in the habenulo-interpeduncular tract, modulating the mesolimbic dopamine system and affecting reward circuits and addiction. Hypothalamic CHRNA3:CHRNB4 nAChR activation by nicotine leads to activation of POMC neurons and a decrease in food intake. The polypeptide is Neuronal acetylcholine receptor subunit beta-4 (CHRNB4) (Gallus gallus (Chicken)).